A 258-amino-acid chain; its full sequence is Venom plasminogen activator GPV-PA (258 aa).

The signal sequence occupies residues 1 to 18; the sequence is MVLIRVLANLLILQLSYA. Positions 19 to 24 are excised as a propeptide; it reads QKSSEL. Positions 25-249 constitute a Peptidase S1 domain; that stretch reads VFGGRPCNIN…YTDWIQSIIA (225 aa). Intrachain disulfides connect C31/C163, C50/C66, C98/C256, C142/C210, C174/C189, and C200/C225. The N-linked (GlcNAc...) asparagine glycan is linked to N44. Active-site charge relay system residues include H65 and D110. N-linked (GlcNAc...) asparagine glycans are attached at residues N121 and N185. S204 (charge relay system) is an active-site residue.

It belongs to the peptidase S1 family. Snake venom subfamily. Monomer. In terms of tissue distribution, expressed by the venom gland.

The protein resides in the secreted. Snake venom serine protease that activates plasminogen. This is Venom plasminogen activator GPV-PA from Trimeresurus albolabris (White-lipped pit viper).